Here is a 377-residue protein sequence, read N- to C-terminus: MTSSETTTDHPRTGKCPIDHSKFARSNEANPDAYINGIKKDQQSSSWWNSLWSRNTDVASEPDVAMLHKKPSTVDTHDHPLANPPPGCPMHKASNENSTGFFSNLFGREKQNSEATPAVQPPATCPMSNSNQKPAGVSEVLTGVDSKQQSYVPEGCPVATPKRGWFNWFGNNDDQKQEAYEVDKSNMMYKNIPQTAVDDQVVGLETTRTTSSIPKVDGKNWEYPSPQQMYNAMWRKGYRDSGENVPIMVQVHNFLNEGAWSEIKAWEREAGENTEPKLLRFEGNANKRTPRALWYMMLGRINPNRWGSGEGPFDRHDWYVQRKDNSIVRYVIDYYEAPDSADGKPVFSLDVRPAVDSFESVALRWKHWRAMRQMQQQ.

Disordered regions lie at residues 1 to 29 (MTSS…SNEA) and 111 to 136 (QNSE…KPAG). The span at 7–22 (TTDHPRTGKCPIDHSK) shows a compositional bias: basic and acidic residues. HRM repeat units follow at residues 114-119 (EATPAV) and 124-129 (TCPMSN).

The protein belongs to the cytochrome c-type heme lyase family.

The protein resides in the mitochondrion inner membrane. Its subcellular location is the mitochondrion intermembrane space. It catalyses the reaction holo-[cytochrome c] = apo-[cytochrome c] + heme b. Lyase that catalyzes the covalent linking of the heme group to the cytochrome C apoprotein to produce the mature functional cytochrome. This Schizosaccharomyces pombe (strain 972 / ATCC 24843) (Fission yeast) protein is Putative holocytochrome-c synthase.